The following is a 478-amino-acid chain: MATDSWALAVDEQEAAVKSMSSLQIKEEKVKADTNGVIKTSTTAEKTEEEEKEDRAAQSLLNKLIRSNLVDNTNQVEVLQRDPSSPLYSVKSFEELRLKPQLLQGVYAMGFNRPSKIQENALPMMLAEPPQNLIAQSQSGTGKTAAFVLAMLSRVEPADRYPQCLCLSPTYELALQTGKVIEQMGKFHPELKLAYAVRGNKLERGQKVSEQIVIGTPGTVLDWCSKLKFIDPKKIKVFVLDEADVMIATQGHQDQSIRIQRMLPRNCQMLLFSATFEDSVWKFAQKVVPDPNIIKLKREEETLDTIKQYYVLCNNREEKFQALCNLYGAITIAQAMIFCHTRKTASWLAAELSKEGHQVALLSGEMMVEQRAAVIERFREGKEKVLVTTNVCARGIDVEQVSVVINFDLPVDKDGNPDNETYLHRIGRTGRFGKRGLAVNMVDSKHSMNILNRIQEHFNKKIERLDTDDLDEIEKIAN.

N-acetylalanine is present on Ala2. An N-terminal lobe region spans residues 2 to 299 (ATDSWALAVD…DPNIIKLKRE (298 aa)). Lys26 is covalently cross-linked (Glycyl lysine isopeptide (Lys-Gly) (interchain with G-Cter in SUMO1); alternate). Lys26 participates in a covalent cross-link: Glycyl lysine isopeptide (Lys-Gly) (interchain with G-Cter in SUMO2); alternate. Residues 34-53 (TNGVIKTSTTAEKTEEEEKE) form a disordered region. A Phosphothreonine modification is found at Thr42. Residues 54–67 (DRAAQSLLNKLIRS) form an N-terminal helix region. The Q motif motif lies at 91 to 119 (KSFEELRLKPQLLQGVYAMGFNRPSKIQE). Residues Gln118 and 137 to 144 (SQSGTGKT) contribute to the ATP site. The 171-residue stretch at 124–294 (MMLAEPPQNL…QKVVPDPNII (171 aa)) folds into the Helicase ATP-binding domain. Positions 241 to 244 (DEAD) match the DEAD box motif. The C-terminal lobe stretch occupies residues 300–478 (EETLDTIKQY…DLDEIEKIAN (179 aa)). In terms of domain architecture, Helicase C-terminal spans 305-473 (TIKQYYVLCN…RLDTDDLDEI (169 aa)). Residues Arg428 and Arg431 each contribute to the ATP site.

The protein belongs to the DEAD box helicase family. DDX19/DBP5 subfamily. Found in testis, heart, brain, liver, skeletal muscle, and kidney.

It localises to the cytoplasm. It is found in the nucleus. The protein resides in the nucleoplasm. It catalyses the reaction ATP + H2O = ADP + phosphate + H(+). Functionally, ATP-dependent RNA helicase involved in mRNA export from the nucleus. Rather than unwinding RNA duplexes, DDX19 functions as a remodeler of ribonucleoprotein particles, whereby proteins bound to nuclear mRNA are dissociated and replaced by cytoplasmic mRNA binding proteins. The sequence is that of ATP-dependent RNA helicase DDX19A (Ddx19a) from Mus musculus (Mouse).